A 131-amino-acid chain; its full sequence is uncharacterized protein (131 aa).

Positions 1 to 16 (MDVLFVAIFAVPLILG) are cleaved as a signal peptide.

The protein localises to the secreted. This is an uncharacterized protein from Homo sapiens (Human).